Reading from the N-terminus, the 196-residue chain is Large ribosomal subunit protein uL10 (196 aa).

A disordered region spans residues 163-196 (GAPAAAEAPAAEEAPAAEAAETEAPAEAAATEEN). The segment covering 164-196 (APAAAEAPAAEEAPAAEAAETEAPAEAAATEEN) has biased composition (low complexity).

This sequence belongs to the universal ribosomal protein uL10 family. As to quaternary structure, part of the ribosomal stalk of the 50S ribosomal subunit. The N-terminus interacts with L11 and the large rRNA to form the base of the stalk. The C-terminus forms an elongated spine to which L12 dimers bind in a sequential fashion forming a multimeric L10(L12)X complex.

Functionally, forms part of the ribosomal stalk, playing a central role in the interaction of the ribosome with GTP-bound translation factors. In Arthrobacter sp. (strain FB24), this protein is Large ribosomal subunit protein uL10.